A 360-amino-acid polypeptide reads, in one-letter code: S-adenosylmethionine:tRNA ribosyltransferase-isomerase (360 aa).

The protein belongs to the QueA family. Monomer.

It is found in the cytoplasm. The enzyme catalyses 7-aminomethyl-7-carbaguanosine(34) in tRNA + S-adenosyl-L-methionine = epoxyqueuosine(34) in tRNA + adenine + L-methionine + 2 H(+). It functions in the pathway tRNA modification; tRNA-queuosine biosynthesis. Functionally, transfers and isomerizes the ribose moiety from AdoMet to the 7-aminomethyl group of 7-deazaguanine (preQ1-tRNA) to give epoxyqueuosine (oQ-tRNA). The protein is S-adenosylmethionine:tRNA ribosyltransferase-isomerase of Burkholderia mallei (strain NCTC 10247).